The primary structure comprises 354 residues: Guanine nucleotide-binding protein G(i) subunit alpha-1 (354 aa).

Glycine 2 carries the N-myristoyl glycine lipid modification. Cysteine 3 is lipidated: S-palmitoyl cysteine. In terms of domain architecture, G-alpha spans arginine 32–phenylalanine 354. Residues lysine 35–threonine 48 form a G1 motif region. Residues glutamate 43–threonine 48, aspartate 150–serine 151, and leucine 175–arginine 178 contribute to the GTP site. Serine 47 lines the Mg(2+) pocket. The tract at residues aspartate 173–threonine 181 is G2 motif. Residue threonine 181 coordinates Mg(2+). The tract at residues phenylalanine 196–arginine 205 is G3 motif. GTP is bound by residues aspartate 200–glutamine 204, asparagine 269–aspartate 272, and alanine 326. The tract at residues isoleucine 265 to aspartate 272 is G4 motif. The tract at residues threonine 324–threonine 329 is G5 motif.

Belongs to the G-alpha family. G(i/o/t/z) subfamily. In terms of assembly, heterotrimeric G proteins are composed of 3 units; alpha, beta and gamma. The alpha chain contains the guanine nucleotide binding site. Part of a spindle orientation complex at least composed of GNAI1, GPSM2 and NUMA1. Identified in complex with the beta subunit GNB1 and the gamma subunit GNG1. Identified in complex with the beta subunit GNB1 and the gamma subunit GNG2. Component of the TAS2R14-GNAI1 complex, consisting of TAS2R14, GNAI1, GNB1 and GNG2; within the complex interacts with TAS2R14; this complex plays a role in the perception of bitterness. GTP binding causes dissociation of the heterotrimer, liberating the individual subunits so that they can interact with downstream effector proteins. Interacts (GDP-bound form) with GPSM1; this inhibits guanine nucleotide exchange and GTP binding. Interacts (GDP-bound form) with GPSM2 (via GoLoco domains); this inhibits guanine nucleotide exchange. Interacts with RGS10; this strongly enhances GTP hydrolysis. Interacts with RGS1 and RGS16; this strongly enhances GTPase activity. Interacts with RGS4. Interacts with RGS12. Interacts (via active GTP- or inactive GDP-bound forms) with RGS14 (via RGS and GoLoco domains). Interacts with RGS3, RGS6, RGS7, RGS8, RGS17, RGS18 and RGS20 (in vitro). Interacts (GDP-bound form) with RIC8A (via C-terminus); promoting GNAI1 folding and association with the plasma membrane. Interacts (inactive GDP-bound form) with NUCB1 (via GBA motif); the interaction leads to activation of GNAI1. Interacts (inactive GDP-bound form) with CCDC88C/DAPLE (via GBA motif); the interaction leads to activation of GNAI1. Interacts (inactive GDP-bound form) with CCDC8A/GIV (via GBA motif). Myristoylation at Gly-2 is required for membrane anchoring before palmitoylation. In terms of processing, palmitoylation at Cys-3 varies with membrane lipid composition. Mainly expressed in the brain, lung and kidney.

The protein localises to the nucleus. Its subcellular location is the cytoplasm. The protein resides in the cell membrane. It is found in the cytoskeleton. It localises to the microtubule organizing center. The protein localises to the centrosome. Its subcellular location is the cell cortex. The protein resides in the membrane. The catalysed reaction is GTP + H2O = GDP + phosphate + H(+). Guanine nucleotide-binding proteins (G proteins) function as transducers downstream of G protein-coupled receptors (GPCRs) in numerous signaling cascades. The alpha chain contains the guanine nucleotide binding site and alternates between an active, GTP-bound state and an inactive, GDP-bound state. Signaling by an activated GPCR promotes GDP release and GTP binding. The alpha subunit has a low GTPase activity that converts bound GTP to GDP, thereby terminating the signal. Both GDP release and GTP hydrolysis are modulated by numerous regulatory proteins. Signaling is mediated via effector proteins, such as adenylate cyclase. Inhibits adenylate cyclase activity of ADCY1, ADCY5 and ADCY6, leading to decreased intracellular cAMP levels. The inactive GDP-bound form prevents the association of RGS14 with centrosomes and is required for the translocation of RGS14 from the cytoplasm to the plasma membrane. Required for normal cytokinesis during mitosis. Required for cortical dynein-dynactin complex recruitment during metaphase. This is Guanine nucleotide-binding protein G(i) subunit alpha-1 (GNAI1) from Cavia porcellus (Guinea pig).